The primary structure comprises 586 residues: MNLFTDFEVRIKNALEQIDIVREKRSELDFGRIGVEPPRDASHGDVATNAAMVLSKPLGMNPRALAEIIIAKLQEDADVADVSAAGPGFINIRLSVGYWQRLLATMISEGEKFGRSTVGAGQKVNVEYVSANPTGPMHVGHCRGAVVGDALANLLGFAGYDVTKEYYINDAGSQIDVLARSVFIRYREALGEQVGEIPAGLYPGDYLVPVGESLAKEFGTKLRGMPEEQWLPIIRERAIDAMMVMIRADLEALNVHHDVFFSERTLHANGAALIRTAINDLTFKGYVYKGALPPPKGQLPEDWEDREQTLFRSTEVGDDIDRPLIKSDGSYTYFAADVAYFKNKFDRGFNEMIYILGADHGGYVKRLEAVARGVSEGKAKLTVLLCQLVKLFRNGEPVKMSKRSGDFVTLREVVDEVGRDSVRFMMLYRKSSEPLDFDFAKVTEQSKDNPVFYVQYAHARCMSIFRQAQEAFPDLDIASLDLAKAVGGVISDPAELQLVAKIAEFPRIIEAAAQAQEPHRIAFYLYDLASSFHGHWNKGKDLPELRFVNDKNRELSIARLGLVHAVASVLKSGLGITGTAAPDEMR.

Residues 131-141 carry the 'HIGH' region motif; the sequence is ANPTGPMHVGH.

This sequence belongs to the class-I aminoacyl-tRNA synthetase family. As to quaternary structure, monomer.

It localises to the cytoplasm. It carries out the reaction tRNA(Arg) + L-arginine + ATP = L-arginyl-tRNA(Arg) + AMP + diphosphate. The sequence is that of Arginine--tRNA ligase from Rhizobium rhizogenes (strain K84 / ATCC BAA-868) (Agrobacterium radiobacter).